The sequence spans 149 residues: Cytochrome c' (149 aa).

Residues 1 to 19 (MRRVLLATLMAALPAAAMA) form the signal peptide. Residues R29, T89, A90, C138, C141, and H142 each coordinate heme c.

Monomer and homodimer. Binds 1 heme c group covalently per subunit.

Functionally, cytochrome c' is the most widely occurring bacterial c-type cytochrome. Cytochromes c' are high-spin proteins and the heme has no sixth ligand. Their exact function is not known. This Cereibacter sphaeroides (strain ATCC 17023 / DSM 158 / JCM 6121 / CCUG 31486 / LMG 2827 / NBRC 12203 / NCIMB 8253 / ATH 2.4.1.) (Rhodobacter sphaeroides) protein is Cytochrome c' (cycP).